The following is a 548-amino-acid chain: Chaperonin GroEL (548 aa).

ATP contacts are provided by residues 30–33, Lys51, 87–91, Gly415, 479–481, and Asp495; these read TLGP, DGTTT, and NAA. A disordered region spans residues 524-548; the sequence is LPKEDKSSDSSSSPAGGMGGMGGMM. Gly residues predominate over residues 539–548; sequence GGMGGMGGMM.

It belongs to the chaperonin (HSP60) family. As to quaternary structure, forms a cylinder of 14 subunits composed of two heptameric rings stacked back-to-back. Interacts with the co-chaperonin GroES.

It localises to the cytoplasm. The catalysed reaction is ATP + H2O + a folded polypeptide = ADP + phosphate + an unfolded polypeptide.. In terms of biological role, together with its co-chaperonin GroES, plays an essential role in assisting protein folding. The GroEL-GroES system forms a nano-cage that allows encapsulation of the non-native substrate proteins and provides a physical environment optimized to promote and accelerate protein folding. The polypeptide is Chaperonin GroEL (Buchnera aphidicola subsp. Acyrthosiphon pisum (strain Tuc7)).